Reading from the N-terminus, the 376-residue chain is STVVGKCCKGNFGMSRFLLSNDFQRKLIVSGKESYYDHFSKRSYSSPSKAPGTESTITSTKIKMPNIGSEGFAFSSFLSTVNKNSRMINFSSCLKTPVKPEQIAANPVILKMTTELEKIPRALRWMCGGFPAIALCDAPEPWQLGFQDAATPIMQGIMDLHHDIFFFLVQILVFVLWVLSRALWCFRSKISPIPQRIVHGTTIEILWTILPSIILMFIAIPSFTLLYSMDDVVVDPAITIKAIGHQWYWSYEYSDYNNSDEQSLAFDSYMVPEDDLELGQLRLLEVDNRVVVPAKTHLRVLITSADVLHSWAVPSLGVKCDAVPGRLNQISTFIQREGVYYGQCSEICGTNHAFMPIVVEAVSTKDYGSWVSNQIQ.

Residues 164 to 184 (IFFFLVQILVFVLWVLSRALW) form a helical membrane-spanning segment. The Mitochondrial matrix portion of the chain corresponds to 185–204 (CFRSKISPIPQRIVHGTTIE). Residues 205-225 (ILWTILPSIILMFIAIPSFTL) traverse the membrane as a helical segment. The Mitochondrial intermembrane segment spans residues 226–376 (LYSMDDVVVD…YGSWVSNQIQ (151 aa)). Cu cation contacts are provided by His309, Cys344, Glu346, Cys348, His352, and Met355. Glu346 serves as a coordination point for Mg(2+).

The protein belongs to the cytochrome c oxidase subunit 2 family. As to quaternary structure, component of the cytochrome c oxidase (complex IV, CIV), a multisubunit enzyme composed of a catalytic core of 3 subunits and several supernumerary subunits. The complex exists as a monomer or a dimer and forms supercomplexes (SCs) in the inner mitochondrial membrane with ubiquinol-cytochrome c oxidoreductase (cytochrome b-c1 complex, complex III, CIII). Cu cation serves as cofactor.

It localises to the mitochondrion inner membrane. The enzyme catalyses 4 Fe(II)-[cytochrome c] + O2 + 8 H(+)(in) = 4 Fe(III)-[cytochrome c] + 2 H2O + 4 H(+)(out). Functionally, component of the cytochrome c oxidase, the last enzyme in the mitochondrial electron transport chain which drives oxidative phosphorylation. The respiratory chain contains 3 multisubunit complexes succinate dehydrogenase (complex II, CII), ubiquinol-cytochrome c oxidoreductase (cytochrome b-c1 complex, complex III, CIII) and cytochrome c oxidase (complex IV, CIV), that cooperate to transfer electrons derived from NADH and succinate to molecular oxygen, creating an electrochemical gradient over the inner membrane that drives transmembrane transport and the ATP synthase. Cytochrome c oxidase is the component of the respiratory chain that catalyzes the reduction of oxygen to water. Electrons originating from reduced cytochrome c in the intermembrane space (IMS) are transferred via the dinuclear copper A center (CU(A)) of subunit 2 and heme A of subunit 1 to the active site in subunit 1, a binuclear center (BNC) formed by heme A3 and copper B (CU(B)). The BNC reduces molecular oxygen to 2 water molecules using 4 electrons from cytochrome c in the IMS and 4 protons from the mitochondrial matrix. This chain is Cytochrome c oxidase subunit 2, mitochondrial (COX2), found in Vigna unguiculata (Cowpea).